The chain runs to 720 residues: GTPase-activating protein gyp2 (720 aa).

Residues 20 to 85 (LDPASFFRIN…AAVRKLEREN (66 aa)) form the GRAM domain. Residues 216–404 (GIPNNLRADI…RILDCLFVNG (189 aa)) enclose the Rab-GAP TBC domain.

The protein resides in the cytoplasm. The protein localises to the nucleus. Stimulates specifically the GTPase activity of ypt2 and ryh1. Inactivates ryh1 during recycling between the endosome and the Golgi compartments. This chain is GTPase-activating protein gyp2, found in Schizosaccharomyces pombe (strain 972 / ATCC 24843) (Fission yeast).